The chain runs to 97 residues: Co-chaperonin GroES (97 aa).

It belongs to the GroES chaperonin family. In terms of assembly, heptamer of 7 subunits arranged in a ring. Interacts with the chaperonin GroEL.

The protein resides in the cytoplasm. Together with the chaperonin GroEL, plays an essential role in assisting protein folding. The GroEL-GroES system forms a nano-cage that allows encapsulation of the non-native substrate proteins and provides a physical environment optimized to promote and accelerate protein folding. GroES binds to the apical surface of the GroEL ring, thereby capping the opening of the GroEL channel. The polypeptide is Co-chaperonin GroES (Pseudomonas putida (strain W619)).